The sequence spans 209 residues: Uracil phosphoribosyltransferase (209 aa).

5-phospho-alpha-D-ribose 1-diphosphate contacts are provided by residues Arg79, Arg104, and 131–139 (DPMLATGGS). Uracil is bound by residues Ile194 and 199-201 (GDA). 5-phospho-alpha-D-ribose 1-diphosphate is bound at residue Asp200.

Belongs to the UPRTase family. Mg(2+) is required as a cofactor.

The catalysed reaction is UMP + diphosphate = 5-phospho-alpha-D-ribose 1-diphosphate + uracil. The protein operates within pyrimidine metabolism; UMP biosynthesis via salvage pathway; UMP from uracil: step 1/1. With respect to regulation, allosterically activated by GTP. Functionally, catalyzes the conversion of uracil and 5-phospho-alpha-D-ribose 1-diphosphate (PRPP) to UMP and diphosphate. The chain is Uracil phosphoribosyltransferase from Clostridium perfringens (strain ATCC 13124 / DSM 756 / JCM 1290 / NCIMB 6125 / NCTC 8237 / Type A).